The primary structure comprises 435 residues: MTDLRRNRYSISAGVGKSVLDSLGKFYGSPKRQLPNKFEAGKEYTGYNAPWIPFALDWLKQGKYSSEWIAMGSLNEEPNNMIQLLKLITGDDGNSHLEKAQAATDLEYPVTKLLWNPSSVGSNTDSQLLASTDQQLRLWKTDFEAGIDSPLLCQASLSTHVKTHNNAPLTSFDWCKTDPSYIVVSSLDTTCTVWDIVAQQSKTQLIAHDKEVYDVAFLKDSINVFVSVGADGSVRMFDLRSLDHSTIIYEGDSTFWKRNGDYTNASPPVSAPLLRLSACDSDVNLMATFHHNSSDVQMIDIRVPGTAYATLRGHKGDVNAVKWMPGSKSKLATCGDDCVVSLWDLDQPVNPSPAPTLSVSGTTPGMTGSTSEYVTPVSSVNSMRETASPLNADNQYSPLLSWKLEHEVNNLSWSVKNDGLAVVYGKSLEILKVPQ.

3 WD repeats span residues 105–149, 164–204, and 207–247; these read DLEY…GIDS, HNNA…SKTQ, and AHDK…HSTI. The residue at position 266 (S266) is a Phosphoserine. Residues 313-353 form a WD 4 repeat; the sequence is GHKGDVNAVKWMPGSKSKLATCGDDCVVSLWDLDQPVNPSP. Residues 352-371 form a disordered region; it reads SPAPTLSVSGTTPGMTGSTS. The span at 358 to 371 shows a compositional bias: low complexity; it reads SVSGTTPGMTGSTS. S388 is modified (phosphoserine).

It localises to the cytoplasm. The protein localises to the golgi apparatus. This is an uncharacterized protein from Schizosaccharomyces pombe (strain 972 / ATCC 24843) (Fission yeast).